A 212-amino-acid chain; its full sequence is Protein-L-isoaspartate O-methyltransferase (212 aa).

Residue serine 60 is part of the active site.

Belongs to the methyltransferase superfamily. L-isoaspartyl/D-aspartyl protein methyltransferase family.

It is found in the cytoplasm. The catalysed reaction is [protein]-L-isoaspartate + S-adenosyl-L-methionine = [protein]-L-isoaspartate alpha-methyl ester + S-adenosyl-L-homocysteine. In terms of biological role, catalyzes the methyl esterification of L-isoaspartyl residues in peptides and proteins that result from spontaneous decomposition of normal L-aspartyl and L-asparaginyl residues. It plays a role in the repair and/or degradation of damaged proteins. The protein is Protein-L-isoaspartate O-methyltransferase of Pseudomonas entomophila (strain L48).